Here is a 759-residue protein sequence, read N- to C-terminus: MNKPVLPPPGGPDDGDRILDEPLTEALSRRYLAYALSTIGSRALPDVRDGLKPVHRRVLYAMSNMRLNPDAAARKCAKVVGEVMGNFHPHGDASIYDALVRLAQEFSQRIPLVEGQGNFGNIDGDSAAAMRYTECKMTEAAMLLLDGIDEDAVDFRPTYDGQDEEPVVLPSGFPNLLANGSSGIAVGMATSIPPHNAAELIDACQLLLANPDATTADLLEKVPGPDFPTGGVIVESRASLLETYETGRGGVRMRAKWEKEDTGRGTYQIVVTEIPYQVKKSDLVEQLADLIDSKKAALLGDVRDESAEDIRLVLEPKSKNVEPEVLMESLFKLSALESRFPVNINVLDARGTPGVMGIKQALMAFLAHRREVLTRRARHRLAKIEARLHILDGLLIAYLNLDEVIRIVRYEDKPKEKLIETFGLTDIQADAILNTRLRQLAKLEEMEIRREHAELVEERDGILAMLASEAKQWKLVGVGLSEVRAALLKIKHPLDKPRPTGVTGRSVFGEAPQVDADAAIEAMIVREPITIILSERGWIRAAKGKIDDPSELKFKEGDKLGFLVPAETTDKLLIFSSDGRFFTLGCDKLPSARGHGEPVRMMIELDDKVKIIDVFPFKAGRKRILASKGGYGFLMPEEEALANRKAGKQVLNVGNEGAAFCLEAVGDQLAVIGDNGKILIFPLEELPEMPRGKGVKLQAYREGGLRDGLSFNAETGAYWIDTAGRRRDWAEWKEWVGRRAGAGKLVPKGFATNKRFRPK.

A Topo IIA-type catalytic domain is found at 44–516 (LPDVRDGLKP…VFGEAPQVDA (473 aa)). The active-site O-(5'-phospho-DNA)-tyrosine intermediate is the Y132.

It belongs to the type II topoisomerase GyrA/ParC subunit family. ParC type 1 subfamily. As to quaternary structure, heterotetramer composed of ParC and ParE.

It is found in the cell membrane. It catalyses the reaction ATP-dependent breakage, passage and rejoining of double-stranded DNA.. In terms of biological role, topoisomerase IV is essential for chromosome segregation. It relaxes supercoiled DNA. Performs the decatenation events required during the replication of a circular DNA molecule. The polypeptide is DNA topoisomerase 4 subunit A (Caulobacter vibrioides (strain ATCC 19089 / CIP 103742 / CB 15) (Caulobacter crescentus)).